A 296-amino-acid chain; its full sequence is Glycine--tRNA ligase alpha subunit (296 aa).

Belongs to the class-II aminoacyl-tRNA synthetase family. As to quaternary structure, tetramer of two alpha and two beta subunits.

The protein localises to the cytoplasm. It catalyses the reaction tRNA(Gly) + glycine + ATP = glycyl-tRNA(Gly) + AMP + diphosphate. This Synechococcus sp. (strain WH7803) protein is Glycine--tRNA ligase alpha subunit.